The following is a 576-amino-acid chain: Malonate--CoA ligase ACSF3, mitochondrial (576 aa).

Residues 1–83 (MLPHVVLTFR…RSLRLSQEIC (83 aa)) constitute a mitochondrion transit peptide. ATP is bound by residues 202–210 (TSGTTGRPK), Asp457, Arg471, and Lys563.

This sequence belongs to the ATP-dependent AMP-binding enzyme family.

Its subcellular location is the mitochondrion. It carries out the reaction tetracosanoate + ATP + CoA = tetracosanoyl-CoA + AMP + diphosphate. It catalyses the reaction malonate + ATP + CoA = malonyl-CoA + AMP + diphosphate. Catalyzes the initial reaction in intramitochondrial fatty acid synthesis, by activating malonate and methylmalonate, but not acetate, into their respective CoA thioester. May have some preference toward very-long-chain substrates. The protein is Malonate--CoA ligase ACSF3, mitochondrial of Homo sapiens (Human).